The primary structure comprises 183 residues: Adenine phosphoribosyltransferase (183 aa).

It belongs to the purine/pyrimidine phosphoribosyltransferase family. As to quaternary structure, homodimer.

It localises to the cytoplasm. The enzyme catalyses AMP + diphosphate = 5-phospho-alpha-D-ribose 1-diphosphate + adenine. It functions in the pathway purine metabolism; AMP biosynthesis via salvage pathway; AMP from adenine: step 1/1. Functionally, catalyzes a salvage reaction resulting in the formation of AMP, that is energically less costly than de novo synthesis. The chain is Adenine phosphoribosyltransferase from Erwinia tasmaniensis (strain DSM 17950 / CFBP 7177 / CIP 109463 / NCPPB 4357 / Et1/99).